We begin with the raw amino-acid sequence, 159 residues long: MNIQIDMIDHTDTLTEKQETLIRELLHEAARYEKLAEGTYELSLSFVSDEEIQELNRDYRGKDQPTDVISFALNEVGEGEQPVEPEAGTPNLLGDIIVSIPRCQEQAEAYGHSFERELAFLIVHGFLHLLGYDHMSEDEEKKMFMRQEDILTAYGLTRS.

Zn(2+) is bound by residues His124, His128, and His134.

This sequence belongs to the endoribonuclease YbeY family. Requires Zn(2+) as cofactor.

The protein resides in the cytoplasm. In terms of biological role, single strand-specific metallo-endoribonuclease involved in late-stage 70S ribosome quality control and in maturation of the 3' terminus of the 16S rRNA. The polypeptide is Endoribonuclease YbeY (Halalkalibacterium halodurans (strain ATCC BAA-125 / DSM 18197 / FERM 7344 / JCM 9153 / C-125) (Bacillus halodurans)).